The following is a 1404-amino-acid chain: DNA-directed RNA polymerase subunit beta' (1404 aa).

Residues Cys-70, Cys-72, Cys-85, and Cys-88 each contribute to the Zn(2+) site. Mg(2+) contacts are provided by Asp-460, Asp-462, and Asp-464. Cys-814, Cys-888, Cys-895, and Cys-898 together coordinate Zn(2+).

It belongs to the RNA polymerase beta' chain family. The RNAP catalytic core consists of 2 alpha, 1 beta, 1 beta' and 1 omega subunit. When a sigma factor is associated with the core the holoenzyme is formed, which can initiate transcription. Mg(2+) is required as a cofactor. Requires Zn(2+) as cofactor.

The enzyme catalyses RNA(n) + a ribonucleoside 5'-triphosphate = RNA(n+1) + diphosphate. Its function is as follows. DNA-dependent RNA polymerase catalyzes the transcription of DNA into RNA using the four ribonucleoside triphosphates as substrates. This chain is DNA-directed RNA polymerase subunit beta', found in Shewanella loihica (strain ATCC BAA-1088 / PV-4).